A 441-amino-acid chain; its full sequence is MAVVPASLSGQDVGSFAYLTIKDRIPQILTKVIDTLHRHKSEFFENHGEEGVEAEKKAISLLSKLRNELQTDKPIIPLVEKFVDTDIWNQYLEYQQSLLNESDGKSRWFYSPWLFVECYMYRRIHEAIIQSPPIDYFDVFKESKEQNFYESQESVIALCTHLQQLIKTIEDLDENQLKDEFFKLLQISLWGNKCDLSLSGGESSSQKTDVLNSLEDLKPFILLNDMEHLWSLLSNCKKTREKASVTRVYIVLDNSGFELVTDLILANFLLSSELATEVHFYGKTIPWFVSDTTIHDFNWLIEQVKHGNHKWMSKCGADWEEYVKMGKWVYHDHIFWTLPHEYCAMPQVAPDLYAELQKAHLILFKGDLNYRKLTGDRKWEFSVPFHQALNGFHPAPLCTIRTLKAEIQVGLKPGQGEQLMASEPCWWTSGKYGIFQYDGPL.

A2 carries the post-translational modification N-acetylalanine. The residue at position 40 (K40) is an N6-acetyllysine. At S102 the chain carries Phosphoserine. Mn(2+) is bound by residues D253 and N254. Position 253 to 254 (253 to 254) interacts with substrate; sequence DN. Positions 258 and 291 each coordinate S-adenosyl-L-methionine. D291 provides a ligand contact to Mn(2+). Substrate-binding positions include 367 to 371 and K404; that span reads DLNYR. The Subfamily III RTxK motif signature appears at 401–404; sequence RTLK.

Belongs to the damage-control phosphatase family. Sugar phosphate phosphatase III subfamily. Requires Mn(2+) as cofactor. It depends on Ni(2+) as a cofactor. Post-translationally, automethylated.

It carries out the reaction beta-D-fructose 1-phosphate + H2O = D-fructose + phosphate. The catalysed reaction is beta-D-fructose 6-phosphate = dihydroxyacetone + D-glyceraldehyde 3-phosphate. It catalyses the reaction L-glutamyl-[protein] + S-adenosyl-L-methionine = [protein]-L-glutamate 5-O-methyl ester + S-adenosyl-L-homocysteine. Functionally, metal-dependent phosphatase that shows phosphatase activity against several substrates, including fructose-1-phosphate and fructose-6-phosphate. Its preference for fructose-1-phosphate, a strong glycating agent that causes DNA damage rather than a canonical yeast metabolite, suggests a damage-control function in hexose phosphate metabolism. Has also been shown to have O-methyltransferase activity that methylates glutamate residues of target proteins to form gamma-glutamyl methyl ester residues. Possibly methylates PCNA, suggesting it is involved in the DNA damage response. In Macaca fascicularis (Crab-eating macaque), this protein is Damage-control phosphatase ARMT1.